Reading from the N-terminus, the 496-residue chain is MFFSTNELQHKDTLAIGLFQKSQLSGKAKEMDELLEGRITELLKEGDISSKRNQLSKFFPSPETGIKRIYFVGLGKESDYTFEEAKEGFAHLFRKLHQDKKQAVSVLLDTFIGKDLPAQDAAHTLSESCLLATYELQDFKHKTNEPDRFIEFVYAMTDHDTTEIQASLKVGEVYGQSVNSARTLVNMPPNMLTSSDLASYAAELAYKYEFEIEILDKEQMEELGMGGILAVNRGSTEPPKLIVLKYQGKEEWTDVIGLVGKGITYDTGGYSLKPRASMIGMKTDMGGSASVLGAMEIIGELRPEQNVIAVIASTDNMISADAMKPDDVIVSLSGKTIEVLNTDAEGRLVLADGVTYAKQHGASVLIDVATLTGGVIVALGNETTGVMTNNDELYAQFKEASEECGEMIWQLPITEKDKKRVRNSKMADLNNSPGRDGHAIMAGAFIGEFAENTPWVHLDIAGTATTEKPSCFGPTGATGVMVRSLATFVERFEGKK.

The Mn(2+) site is built by Lys261 and Asp266. The active site involves Lys273. Mn(2+)-binding residues include Asp284, Asp343, and Glu345. The active site involves Arg347.

This sequence belongs to the peptidase M17 family. Mn(2+) serves as cofactor.

Its subcellular location is the cytoplasm. It catalyses the reaction Release of an N-terminal amino acid, Xaa-|-Yaa-, in which Xaa is preferably Leu, but may be other amino acids including Pro although not Arg or Lys, and Yaa may be Pro. Amino acid amides and methyl esters are also readily hydrolyzed, but rates on arylamides are exceedingly low.. It carries out the reaction Release of an N-terminal amino acid, preferentially leucine, but not glutamic or aspartic acids.. In terms of biological role, presumably involved in the processing and regular turnover of intracellular proteins. Catalyzes the removal of unsubstituted N-terminal amino acids from various peptides. In Bacillus pumilus (strain SAFR-032), this protein is Probable cytosol aminopeptidase.